Here is a 482-residue protein sequence, read N- to C-terminus: Variant surface glycoprotein ANTAT 1.1C (482 aa).

The first 8 residues, 1 to 8 (LHPQQALA), serve as a signal peptide directing secretion. 2 disulfide bridges follow: Cys-24-Cys-151 and Cys-133-Cys-188. An N-linked (GlcNAc...) asparagine glycan is attached at Asn-92. N-linked (GlcNAc...) asparagine glycans are attached at residues Asn-398 and Asn-411. Asp-459 carries the GPI-anchor amidated aspartate lipid modification. Residues 460 to 482 (SSILVTKKFALSLVSAAFASLLF) constitute a propeptide, removed in mature form.

The protein localises to the cell membrane. Functionally, VSG forms a coat on the surface of the parasite. The trypanosome evades the immune response of the host by expressing a series of antigenically distinct VSGs from an estimated 1000 VSG genes. This is Variant surface glycoprotein ANTAT 1.1C from Trypanosoma brucei brucei.